A 548-amino-acid polypeptide reads, in one-letter code: ATP synthase subunit alpha, mitochondrial (548 aa).

209–216 (GDRQTGKT) serves as a coordination point for ATP.

Belongs to the ATPase alpha/beta chains family. F-type ATPases have 2 components, CF(1) - the catalytic core - and CF(0) - the membrane proton channel. CF(1) has five subunits: alpha(3), beta(3), gamma(1), delta(1), epsilon(1). CF(0) has three main subunits: a, b and c.

It is found in the mitochondrion. The protein localises to the mitochondrion inner membrane. Functionally, mitochondrial membrane ATP synthase (F(1)F(0) ATP synthase or Complex V) produces ATP from ADP in the presence of a proton gradient across the membrane which is generated by electron transport complexes of the respiratory chain. F-type ATPases consist of two structural domains, F(1) - containing the extramembraneous catalytic core, and F(0) - containing the membrane proton channel, linked together by a central stalk and a peripheral stalk. During catalysis, ATP synthesis in the catalytic domain of F(1) is coupled via a rotary mechanism of the central stalk subunits to proton translocation. Subunits alpha and beta form the catalytic core in F(1). Rotation of the central stalk against the surrounding alpha(3)beta(3) subunits leads to hydrolysis of ATP in three separate catalytic sites on the beta subunits. Subunit alpha does not bear the catalytic high-affinity ATP-binding sites. The sequence is that of ATP synthase subunit alpha, mitochondrial (ATP1) from Kluyveromyces lactis (strain ATCC 8585 / CBS 2359 / DSM 70799 / NBRC 1267 / NRRL Y-1140 / WM37) (Yeast).